A 120-amino-acid chain; its full sequence is MFLLYEYDIFWAFLIISSVIPILAFRISGLLAPTSKGPEKLSSYESGIEPMGDAWLQFRIRYYMFALVFVVFDVETIFLYPWALSFDILGVSVFIEALIFVLILVLGLVYAWRKGALEWS.

Transmembrane regions (helical) follow at residues 2-22, 64-84, and 88-108; these read FLLY…VIPI, MFAL…PWAL, and ILGV…VLGL.

It belongs to the complex I subunit 3 family. In terms of assembly, NDH is composed of at least 16 different subunits, 5 of which are encoded in the nucleus.

The protein resides in the plastid. The protein localises to the chloroplast thylakoid membrane. The enzyme catalyses a plastoquinone + NADH + (n+1) H(+)(in) = a plastoquinol + NAD(+) + n H(+)(out). It catalyses the reaction a plastoquinone + NADPH + (n+1) H(+)(in) = a plastoquinol + NADP(+) + n H(+)(out). Functionally, NDH shuttles electrons from NAD(P)H:plastoquinone, via FMN and iron-sulfur (Fe-S) centers, to quinones in the photosynthetic chain and possibly in a chloroplast respiratory chain. The immediate electron acceptor for the enzyme in this species is believed to be plastoquinone. Couples the redox reaction to proton translocation, and thus conserves the redox energy in a proton gradient. The polypeptide is NAD(P)H-quinone oxidoreductase subunit 3, chloroplastic (Oenothera argillicola (Appalachian evening primrose)).